Here is a 128-residue protein sequence, read N- to C-terminus: Small ribosomal subunit protein bS6 (128 aa).

A disordered region spans residues 97-128 (TTPSPMMKEEKSRSLTAAPATDEAKPAEAESA). The segment covering 118 to 128 (DEAKPAEAESA) has biased composition (basic and acidic residues).

Belongs to the bacterial ribosomal protein bS6 family.

Binds together with bS18 to 16S ribosomal RNA. The protein is Small ribosomal subunit protein bS6 of Aromatoleum aromaticum (strain DSM 19018 / LMG 30748 / EbN1) (Azoarcus sp. (strain EbN1)).